Consider the following 450-residue polypeptide: Divalent metal cation transporter MntH (450 aa).

11 helical membrane-spanning segments follow: residues 34-54 (LSFL…GNWI), 61-81 (AQYG…AMLL), 108-128 (IAII…IAEV), 141-161 (IPLI…LFIM), 170-190 (AIVG…VYIS), 212-232 (GILY…NLYL), 263-283 (IQLS…ASLF), 305-325 (PVLG…ALLA), 361-381 (SLAV…AAKI), 383-403 (QLLV…LIPL), and 422-442 (VNII…YLIV).

It belongs to the NRAMP family.

The protein localises to the cell membrane. Functionally, h(+)-stimulated, divalent metal cation uptake system. The sequence is that of Divalent metal cation transporter MntH from Staphylococcus aureus (strain Mu3 / ATCC 700698).